A 347-amino-acid chain; its full sequence is Phosphoribosylformylglycinamidine cyclo-ligase (347 aa).

The protein belongs to the AIR synthase family.

It is found in the cytoplasm. It carries out the reaction 2-formamido-N(1)-(5-O-phospho-beta-D-ribosyl)acetamidine + ATP = 5-amino-1-(5-phospho-beta-D-ribosyl)imidazole + ADP + phosphate + H(+). It functions in the pathway purine metabolism; IMP biosynthesis via de novo pathway; 5-amino-1-(5-phospho-D-ribosyl)imidazole from N(2)-formyl-N(1)-(5-phospho-D-ribosyl)glycinamide: step 2/2. The polypeptide is Phosphoribosylformylglycinamidine cyclo-ligase (Yersinia pestis).